Here is a 99-residue protein sequence, read N- to C-terminus: Acylphosphatase-2 (99 aa).

Ser2 carries the N-acetylserine modification. The region spanning 9–99 (SVDYEVFGRV…LEYSNFSIRY (91 aa)) is the Acylphosphatase-like domain. Active-site residues include Arg24 and Asn42. Position 93 is a phosphoserine (Ser93).

It belongs to the acylphosphatase family.

It carries out the reaction an acyl phosphate + H2O = a carboxylate + phosphate + H(+). In terms of biological role, its physiological role is not yet clear. The sequence is that of Acylphosphatase-2 (ACYP2) from Cavia porcellus (Guinea pig).